The chain runs to 168 residues: Cytolysin secretion protein (168 aa).

In Vibrio vulnificus (strain CMCP6), this protein is Cytolysin secretion protein (vvhB).